A 356-amino-acid chain; its full sequence is tRNA-specific 2-thiouridylase MnmA (356 aa).

ATP-binding positions include 6–13 and Leu32; that span reads AMSGGVDS. Residue Cys101 is the Nucleophile of the active site. Residues Cys101 and Cys193 are joined by a disulfide bond. Gly125 provides a ligand contact to ATP. Positions 143–145 are interaction with tRNA; the sequence is KDQ. Cys193 functions as the Cysteine persulfide intermediate in the catalytic mechanism.

It belongs to the MnmA/TRMU family.

Its subcellular location is the cytoplasm. The enzyme catalyses S-sulfanyl-L-cysteinyl-[protein] + uridine(34) in tRNA + AH2 + ATP = 2-thiouridine(34) in tRNA + L-cysteinyl-[protein] + A + AMP + diphosphate + H(+). Catalyzes the 2-thiolation of uridine at the wobble position (U34) of tRNA, leading to the formation of s(2)U34. This is tRNA-specific 2-thiouridylase MnmA from Mycolicibacterium smegmatis (strain ATCC 700084 / mc(2)155) (Mycobacterium smegmatis).